Consider the following 480-residue polypeptide: 2-succinylbenzoate--CoA ligase (480 aa).

The protein belongs to the ATP-dependent AMP-binding enzyme family. MenE subfamily.

The catalysed reaction is 2-succinylbenzoate + ATP + CoA = 2-succinylbenzoyl-CoA + AMP + diphosphate. The protein operates within quinol/quinone metabolism; 1,4-dihydroxy-2-naphthoate biosynthesis; 1,4-dihydroxy-2-naphthoate from chorismate: step 5/7. It functions in the pathway quinol/quinone metabolism; menaquinone biosynthesis. Its function is as follows. Converts 2-succinylbenzoate (OSB) to 2-succinylbenzoyl-CoA (OSB-CoA). The chain is 2-succinylbenzoate--CoA ligase from Oceanobacillus iheyensis (strain DSM 14371 / CIP 107618 / JCM 11309 / KCTC 3954 / HTE831).